The chain runs to 277 residues: Thymidylate synthase (277 aa).

Arg-21 provides a ligand contact to dUMP. His-51 is a (6R)-5,10-methylene-5,6,7,8-tetrahydrofolate binding site. Position 126–127 (126–127 (RR)) interacts with dUMP. The active-site Nucleophile is the Cys-159. Residues 179–182 (RSGD), Asn-190, and 220–222 (HLY) each bind dUMP. (6R)-5,10-methylene-5,6,7,8-tetrahydrofolate is bound at residue Asp-182. Residue Ala-276 participates in (6R)-5,10-methylene-5,6,7,8-tetrahydrofolate binding.

This sequence belongs to the thymidylate synthase family. Bacterial-type ThyA subfamily. As to quaternary structure, homodimer.

The protein localises to the cytoplasm. It carries out the reaction dUMP + (6R)-5,10-methylene-5,6,7,8-tetrahydrofolate = 7,8-dihydrofolate + dTMP. It functions in the pathway pyrimidine metabolism; dTTP biosynthesis. Catalyzes the reductive methylation of 2'-deoxyuridine-5'-monophosphate (dUMP) to 2'-deoxythymidine-5'-monophosphate (dTMP) while utilizing 5,10-methylenetetrahydrofolate (mTHF) as the methyl donor and reductant in the reaction, yielding dihydrofolate (DHF) as a by-product. This enzymatic reaction provides an intracellular de novo source of dTMP, an essential precursor for DNA biosynthesis. This chain is Thymidylate synthase, found in Alcanivorax borkumensis (strain ATCC 700651 / DSM 11573 / NCIMB 13689 / SK2).